A 196-amino-acid polypeptide reads, in one-letter code: Pyridoxal 5'-phosphate synthase subunit PdxT (196 aa).

47 to 49 (GES) lines the L-glutamine pocket. Cys79 serves as the catalytic Nucleophile. L-glutamine contacts are provided by residues Arg106 and 134–135 (IR). Active-site charge relay system residues include His170 and Glu172.

Belongs to the glutaminase PdxT/SNO family. In terms of assembly, in the presence of PdxS, forms a dodecamer of heterodimers. Only shows activity in the heterodimer.

The catalysed reaction is aldehydo-D-ribose 5-phosphate + D-glyceraldehyde 3-phosphate + L-glutamine = pyridoxal 5'-phosphate + L-glutamate + phosphate + 3 H2O + H(+). It catalyses the reaction L-glutamine + H2O = L-glutamate + NH4(+). It functions in the pathway cofactor biosynthesis; pyridoxal 5'-phosphate biosynthesis. In terms of biological role, catalyzes the hydrolysis of glutamine to glutamate and ammonia as part of the biosynthesis of pyridoxal 5'-phosphate. The resulting ammonia molecule is channeled to the active site of PdxS. This chain is Pyridoxal 5'-phosphate synthase subunit PdxT, found in Bacillus cereus (strain ZK / E33L).